A 1027-amino-acid polypeptide reads, in one-letter code: Circadian locomoter output cycles protein kaput (1027 aa).

The bHLH domain occupies 15–65; it reads LCRKSRNLSEKKRRDQFNSLVNDLSALISTSSRKMDKSTVLKSTIAFLKNH. PAS domains lie at 88-160 and 255-321; these read NDEY…VIEP and REMS…ELRQ. Disordered stretches follow at residues 377–402, 443–575, 765–800, 869–911, and 926–1027; these read RKEG…ASTG, TSPA…QQLQ, QQMM…TQQQ, TINP…NNED, and SINF…GSSQ. Residues 383–402 show a composition bias toward low complexity; sequence SGNSNSITNNGSSKVIASTG. The span at 443–486 shows a compositional bias: polar residues; sequence TSPAVDSSPMWSASAVQPSGSCQINPLKTSRPASSYGNISSTGI. 2 stretches are compositionally biased toward low complexity: residues 504–516 and 552–575; these read SDST…SVTS and QQQQ…QQLQ. The implicated in the circadian rhythmicity stretch occupies residues 780-1027; that stretch reads QHNLQQQHQS…SPHTAPGSSQ (248 aa). Composition is skewed to low complexity over residues 871–909 and 951–995; these read NPFN…QNNN and SGSN…NQNQ. Residues 1006-1027 are compositionally biased toward polar residues; that stretch reads QMSQEQSQNLFNSPHTAPGSSQ.

Efficient DNA binding requires dimerization with another bHLH protein. Forms a heterodimer with Cycle. Widely expressed. Found in head, body, and appendage fractions.

Its subcellular location is the nucleus. Functionally, circadian regulator that acts as a transcription factor and generates a rhythmic output with a period of about 24 hours. Oscillates in antiphase to the cycling observed for period (PER) and timeless (TIM). According to PubMed:9742131, reaches peak abundance within several hours of the dark-light transition at ZT0 (zeitgeber 0), whereas PubMed:9616122 describes bimodal oscillating expression with maximum at ZT5 and ZT23. Clock-cycle heterodimers activate cycling transcription of PER and TIM by binding to the E-box (5'-CACGTG-3') present in their promoters. Once induced, Period and Timeless block Clock's ability to transactivate their promoters. The chain is Circadian locomoter output cycles protein kaput (Clk) from Drosophila melanogaster (Fruit fly).